The primary structure comprises 67 residues: Small ribosomal subunit protein eS17 (67 aa).

Belongs to the eukaryotic ribosomal protein eS17 family.

The polypeptide is Small ribosomal subunit protein eS17 (Thermococcus onnurineus (strain NA1)).